Reading from the N-terminus, the 615-residue chain is DNA mismatch repair protein MutL (615 aa).

This sequence belongs to the DNA mismatch repair MutL/HexB family.

Functionally, this protein is involved in the repair of mismatches in DNA. It is required for dam-dependent methyl-directed DNA mismatch repair. May act as a 'molecular matchmaker', a protein that promotes the formation of a stable complex between two or more DNA-binding proteins in an ATP-dependent manner without itself being part of a final effector complex. The protein is DNA mismatch repair protein MutL of Histophilus somni (strain 2336) (Haemophilus somnus).